The following is a 594-amino-acid chain: Aspartate--tRNA(Asp/Asn) ligase (594 aa).

Glu-176 serves as a coordination point for L-aspartate. Positions 200–203 (QIFK) are aspartate. Position 222 (Arg-222) interacts with L-aspartate. ATP is bound by residues 222–224 (RDE) and Gln-231. His-450 serves as a coordination point for L-aspartate. An ATP-binding site is contributed by Glu-484. Position 491 (Arg-491) interacts with L-aspartate. Position 536-539 (536-539 (GLDR)) interacts with ATP.

Belongs to the class-II aminoacyl-tRNA synthetase family. Type 1 subfamily. As to quaternary structure, homodimer.

Its subcellular location is the cytoplasm. It carries out the reaction tRNA(Asx) + L-aspartate + ATP = L-aspartyl-tRNA(Asx) + AMP + diphosphate. Aspartyl-tRNA synthetase with relaxed tRNA specificity since it is able to aspartylate not only its cognate tRNA(Asp) but also tRNA(Asn). Reaction proceeds in two steps: L-aspartate is first activated by ATP to form Asp-AMP and then transferred to the acceptor end of tRNA(Asp/Asn). The chain is Aspartate--tRNA(Asp/Asn) ligase from Geobacillus sp. (strain WCH70).